Reading from the N-terminus, the 215-residue chain is Small ribosomal subunit protein uS3 (215 aa).

The KH type-2 domain occupies 39–107 (VRQYLQKRLA…PVHINIEEIR (69 aa)).

The protein belongs to the universal ribosomal protein uS3 family. As to quaternary structure, part of the 30S ribosomal subunit. Forms a tight complex with proteins S10 and S14.

Functionally, binds the lower part of the 30S subunit head. Binds mRNA in the 70S ribosome, positioning it for translation. This chain is Small ribosomal subunit protein uS3, found in Nitrosomonas eutropha (strain DSM 101675 / C91 / Nm57).